We begin with the raw amino-acid sequence, 415 residues long: Polyketide biosynthesis malonyl-ACP decarboxylase PksF (415 aa).

The region spanning 6 to 407 (LPEVVVTGVG…GMNTAVCIQN (402 aa)) is the Ketosynthase family 3 (KS3) domain.

It belongs to the thiolase-like superfamily. Beta-ketoacyl-ACP synthases family.

Its subcellular location is the cytoplasm. It catalyses the reaction malonyl-[ACP] + H(+) = acetyl-[ACP] + CO2. It functions in the pathway antibiotic biosynthesis; bacillaene biosynthesis. Functionally, involved in some intermediate steps for the synthesis of the antibiotic polyketide bacillaene which is involved in secondary metabolism. It decarboxylates selectively the malonyl group attached on the acyl-carrier-protein AcpK (Mal-AcpK). The protein is Polyketide biosynthesis malonyl-ACP decarboxylase PksF (pksF) of Bacillus subtilis (strain 168).